Reading from the N-terminus, the 317-residue chain is Transaldolase (317 aa).

Residue Lys-126 is the Schiff-base intermediate with substrate of the active site.

Belongs to the transaldolase family. Type 1 subfamily. Homodimer.

The protein localises to the cytoplasm. The enzyme catalyses D-sedoheptulose 7-phosphate + D-glyceraldehyde 3-phosphate = D-erythrose 4-phosphate + beta-D-fructose 6-phosphate. It participates in carbohydrate degradation; pentose phosphate pathway; D-glyceraldehyde 3-phosphate and beta-D-fructose 6-phosphate from D-ribose 5-phosphate and D-xylulose 5-phosphate (non-oxidative stage): step 2/3. In terms of biological role, transaldolase is important for the balance of metabolites in the pentose-phosphate pathway. The chain is Transaldolase from Burkholderia thailandensis (strain ATCC 700388 / DSM 13276 / CCUG 48851 / CIP 106301 / E264).